Reading from the N-terminus, the 444-residue chain is Pentatricopeptide repeat-containing protein At4g35850, mitochondrial (444 aa).

The transit peptide at 1–25 (MKFLMQSISGRNRSLVRALVSRRYF) directs the protein to the mitochondrion. PPR repeat units follow at residues 40–74 (DLSEYNTAVNSVTAQRRHYLLRDVYDDMKLDGVQP), 75–109 (TADIFHSFVVGTMKGARLSDAFFFREEMKAMGIAP), 110–144 (DVNLYNFLISTCGKCKNGKEAIRVYDEMKRYDVKP), 145–179 (NGQTFVCLLNACAVSGQLDLVYAIVRDMTAAGVGL), 255–289 (NLTVYHVAFSALADLKDVKATEALLEMLKKDGKDT), and 290–325 (DTYCMLQIMRCYLHSQDFENGLKLFQDYMSADKIPA).

It belongs to the PPR family. P subfamily.

The protein resides in the mitochondrion. This chain is Pentatricopeptide repeat-containing protein At4g35850, mitochondrial, found in Arabidopsis thaliana (Mouse-ear cress).